The sequence spans 154 residues: Ubiquitin-conjugating enzyme E2 L3 (154 aa).

One can recognise a UBC core domain in the interval 2–149; it reads AASRRLMKEL…AEEFTKKYGE (148 aa). C86 functions as the Glycyl thioester intermediate in the catalytic mechanism. The residue at position 131 (K131) is an N6-acetyllysine.

The protein belongs to the ubiquitin-conjugating enzyme family. In terms of assembly, interacts with PRKN; involved in ubiquitination and degradation of misfolded proteins. Interacts with UBE3A. Interacts with CCNB1IP1, CBL, ZAP70, RNF19A, RNF19B and RNF144B. Interacts with ARIH1. Interacts with ARIH2 (via RING-type 1). Interacts with NCOA1; they functionally interact to regulate progesterone receptor transcriptional activity. Interacts with NDFIP1 (via N-terminus); the interaction mediates recruitment of UBE2L3 to ITCH and causes MAP3K7 ubiquitination. Post-translationally, ubiquitinated. The alteration of UBE2L3 protein levels during the S-phase of the cell cycle is due to ubiquitin-dependent proteasomal degradation. Autoubiquitinated in vitro.

The protein localises to the nucleus. The protein resides in the cytoplasm. The enzyme catalyses S-ubiquitinyl-[E1 ubiquitin-activating enzyme]-L-cysteine + [E2 ubiquitin-conjugating enzyme]-L-cysteine = [E1 ubiquitin-activating enzyme]-L-cysteine + S-ubiquitinyl-[E2 ubiquitin-conjugating enzyme]-L-cysteine.. The protein operates within protein modification; protein ubiquitination. Ubiquitin-conjugating enzyme E2 that specifically acts with HECT-type and RBR family E3 ubiquitin-protein ligases. Does not function with most RING-containing E3 ubiquitin-protein ligases because it lacks intrinsic E3-independent reactivity with lysine: in contrast, it has activity with the RBR family E3 enzymes, such as PRKN, RNF31 and ARIH1, that function like RING-HECT hybrids. Accepts ubiquitin from the E1 complex and catalyzes its covalent attachment to other proteins. Mediates ubiquitination by the CUL9-RBX1 complex. In vitro catalyzes 'Lys-11'-linked polyubiquitination. Involved in the selective degradation of short-lived and abnormal proteins. Down-regulated during the S-phase it is involved in progression through the cell cycle. Regulates nuclear hormone receptors transcriptional activity. May play a role in myelopoiesis. The chain is Ubiquitin-conjugating enzyme E2 L3 (UBE2L3) from Bos taurus (Bovine).